The following is a 460-amino-acid chain: Cell death abnormality protein 8 (460 aa).

Over 1–45 the chain is Cytoplasmic; sequence MYLKKHESKLLLIPKNEDKEDAGIIAVLTDRVPSVLIVRWFDLFC. The helical transmembrane segment at 46-66 threads the bilayer; sequence FGFAMCSYVLDFFSDIGIAIF. Residues 67–77 lie on the Extracellular side of the membrane; sequence HFWAGRHLSGA. A helical membrane pass occupies residues 78 to 98; the sequence is LVLTFALIPSVIINIISMVWM. The Cytoplasmic segment spans residues 99–123; it reads LDDEMHWKRRAHPRRTGTFELNQKR. Residues 124-144 traverse the membrane as a helical segment; sequence FISLGKMITLCIFQMGPLFWY. Over 145 to 219 the chain is Extracellular; the sequence is YKALYYGWMF…YYISGKYPYW (75 aa). Residues 220–240 traverse the membrane as a helical segment; that stretch reads LYFQAASLTLSIISISWSVVV. Residues 241-274 are Cytoplasmic-facing; it reads QNRSLRMTRDDKVNIWPHEAVLQFCWRFLTILAR. A helical membrane pass occupies residues 275–295; it reads IITLVAFVLLFGIYVVFLIFG. Topologically, residues 296–320 are extracellular; that stretch reads HLIVTLVHVIFLQALHIEACTHIEK. A helical membrane pass occupies residues 321 to 341; the sequence is LLLLINAMIHLFTPFNMAEGN. Residues 342 to 353 are Cytoplasmic-facing; that stretch reads TRYRYLVAYTVE. The helical transmembrane segment at 354 to 374 threads the bilayer; it reads FIEMMIIFLLLPTPLDAFPLI. Topologically, residues 375–378 are extracellular; it reads EKIR. A helical transmembrane segment spans residues 379-399; it reads IGVPATFFIGIFIMLIYYKFF. Residues 400 to 460 are Cytoplasmic-facing; it reads HPNRRQDLEA…SLLEEDECHN (61 aa).

The protein belongs to the XK family. Post-translationally, cleavage by ced-3 activates ced-8 function in promoting phosphatidylserine exposure at the surface of apoptotic cells.

Its subcellular location is the cell membrane. Acts downstream of ced-9 and caspase ced-3 to promote phosphatidylserine exposure on apoptotic cell surface, possibly by mediating phospholipid scrambling. Phosphatidylserine is a specific marker only present at the surface of apoptotic cells and acts as a specific signal for engulfment. Regulates apoptosis kinetics during embryonic development. Not required for engulfment of germ cell corpses. The chain is Cell death abnormality protein 8 from Caenorhabditis briggsae.